The primary structure comprises 358 residues: MQLPVMPPVSPMLAKSVTAIPPDASYEPKWDGFRSICFRDGDQVELGSRNERPMTRYFPELVAAIRAELPHRCVIDGEIIIATDHGLDFEALQQRIHPAESRVRMLADRTPASFIAFDLLALGDDDYTGRPFSERRAALVDAVTGSGADADLSIHVTPATTDMATAQRWFSEFEGAGLDGVIAKPPHITYQPDKRVMFKIKHLRTADCVVAGYRVHKSGSDAIGSLLLGLYQEDGQLASVGVIGAFPMAERRRLLTELQPLVTSFDDHPWNWAAHVAGQRTPRKNEFSRWNVGKDLSFVPLRPERVVEVRYDRMEGARFRHTAQFNRWRPDRDPRSCSYAQLERPLTVSLSDIVPGLR.

The active-site N6-AMP-lysine intermediate is the lysine 29.

The protein belongs to the ATP-dependent DNA ligase family. The cofactor is a divalent metal cation.

The catalysed reaction is ATP + (deoxyribonucleotide)n-3'-hydroxyl + 5'-phospho-(deoxyribonucleotide)m = (deoxyribonucleotide)n+m + AMP + diphosphate.. Functionally, DNA ligase that seals nicks in double-stranded DNA during DNA replication, DNA recombination and DNA repair. This Mycobacterium tuberculosis (strain ATCC 25618 / H37Rv) protein is DNA ligase C (ligC).